Here is a 368-residue protein sequence, read N- to C-terminus: Quinolinate synthase (368 aa).

The iminosuccinate site is built by histidine 46 and serine 63. Cysteine 110 contacts [4Fe-4S] cluster. Iminosuccinate-binding positions include 141–143 (YVN) and serine 162. [4Fe-4S] cluster is bound at residue cysteine 230. Iminosuccinate contacts are provided by residues 256-258 (HPE) and threonine 273. Cysteine 320 contributes to the [4Fe-4S] cluster binding site.

Belongs to the quinolinate synthase family. Type 3 subfamily. It depends on [4Fe-4S] cluster as a cofactor.

The protein resides in the cytoplasm. It catalyses the reaction iminosuccinate + dihydroxyacetone phosphate = quinolinate + phosphate + 2 H2O + H(+). It participates in cofactor biosynthesis; NAD(+) biosynthesis; quinolinate from iminoaspartate: step 1/1. Functionally, catalyzes the condensation of iminoaspartate with dihydroxyacetone phosphate to form quinolinate. The polypeptide is Quinolinate synthase (Bacillus mycoides (strain KBAB4) (Bacillus weihenstephanensis)).